A 257-amino-acid chain; its full sequence is Flap endonuclease Xni (257 aa).

Asp-109 is a binding site for Mg(2+). The region spanning 165–255 (LKPEQLADYW…FNLQDIRYEK (91 aa)) is the 5'-3' exonuclease domain. The K(+) site is built by Leu-176, Ala-177, Ile-187, and Ile-190. The tract at residues 189 to 194 (GIGPKA) is interaction with DNA.

Belongs to the Xni family. Mg(2+) serves as cofactor. It depends on K(+) as a cofactor.

Functionally, has flap endonuclease activity. During DNA replication, flap endonucleases cleave the 5'-overhanging flap structure that is generated by displacement synthesis when DNA polymerase encounters the 5'-end of a downstream Okazaki fragment. This Aliivibrio salmonicida (strain LFI1238) (Vibrio salmonicida (strain LFI1238)) protein is Flap endonuclease Xni.